Consider the following 110-residue polypeptide: MEAIAKHRFAGISPQKARLVADQVRGKSVDQALEILTFSNKKAAVLVKKVLESAIANAEHNEGADIDDLNVAKIFVDEGPIMKRIMPRAKGRADRILKRSSHITIVVADR.

Belongs to the universal ribosomal protein uL22 family. As to quaternary structure, part of the 50S ribosomal subunit.

In terms of biological role, this protein binds specifically to 23S rRNA; its binding is stimulated by other ribosomal proteins, e.g. L4, L17, and L20. It is important during the early stages of 50S assembly. It makes multiple contacts with different domains of the 23S rRNA in the assembled 50S subunit and ribosome. The globular domain of the protein is located near the polypeptide exit tunnel on the outside of the subunit, while an extended beta-hairpin is found that lines the wall of the exit tunnel in the center of the 70S ribosome. In Aliivibrio fischeri (strain MJ11) (Vibrio fischeri), this protein is Large ribosomal subunit protein uL22.